The primary structure comprises 202 residues: Imidazoleglycerol-phosphate dehydratase (202 aa).

Belongs to the imidazoleglycerol-phosphate dehydratase family.

Its subcellular location is the cytoplasm. The catalysed reaction is D-erythro-1-(imidazol-4-yl)glycerol 3-phosphate = 3-(imidazol-4-yl)-2-oxopropyl phosphate + H2O. It participates in amino-acid biosynthesis; L-histidine biosynthesis; L-histidine from 5-phospho-alpha-D-ribose 1-diphosphate: step 6/9. This chain is Imidazoleglycerol-phosphate dehydratase, found in Brucella anthropi (strain ATCC 49188 / DSM 6882 / CCUG 24695 / JCM 21032 / LMG 3331 / NBRC 15819 / NCTC 12168 / Alc 37) (Ochrobactrum anthropi).